The sequence spans 1088 residues: Tyrocidine synthase 1 (1088 aa).

The Carrier domain occupies 528–602; it reads PPRTETESIL…QVALFVKSTT (75 aa). Ser563 carries the O-(pantetheine 4'-phosphoryl)serine modification.

The protein belongs to the ATP-dependent AMP-binding enzyme family. As to quaternary structure, large multienzyme complex of TycA, TycB and TycC. It depends on pantetheine 4'-phosphate as a cofactor.

It catalyses the reaction L-phenylalanine + ATP + H2O = D-phenylalanine + AMP + diphosphate + H(+). Its pathway is antibiotic biosynthesis; tyrocidine biosynthesis. Functionally, in the first step of peptide synthesis this enzyme activates phenylalanine and racemizes it to the D-isomer. This is Tyrocidine synthase 1 (tycA) from Brevibacillus parabrevis.